Consider the following 292-residue polypeptide: E3 ubiquitin-protein ligase RNF144A (292 aa).

A TRIAD supradomain region spans residues 16-236 (PLVSCKLCLG…YDKGPCRNKL (221 aa)). 14 residues coordinate Zn(2+): cysteine 20, cysteine 23, cysteine 43, cysteine 46, cysteine 111, cysteine 116, cysteine 135, cysteine 138, cysteine 143, cysteine 146, histidine 151, cysteine 156, cysteine 185, and cysteine 188. The segment at 20–70 (CKLCLGEYPAEQMTTIAQCQCIFCTLCLKQYVELLIKEGLETAISCPDAAC) adopts an RING-type 1 zinc-finger fold. An IBR-type zinc finger spans residues 91-156 (QRYKKLQFER…KARWHPGQGC (66 aa)). The segment at 185-214 (CPKCRVYIERDEGCAQMMCKNCKHAFCWYC) adopts an RING-type 2; atypical zinc-finger fold. Residue cysteine 198 is part of the active site. Zn(2+) contacts are provided by cysteine 203, cysteine 206, cysteine 211, cysteine 214, histidine 226, and cysteine 232. Residues 250 to 270 (VVGIFAGFGLLLLVASPFLLL) form a helical membrane-spanning segment.

The protein belongs to the RBR family. RNF144 subfamily. Self-associates. Interacts with UBE2L3. Post-translationally, autoubiquitinated.

It localises to the cell membrane. It is found in the cytoplasmic vesicle membrane. The enzyme catalyses [E2 ubiquitin-conjugating enzyme]-S-ubiquitinyl-L-cysteine + [acceptor protein]-L-lysine = [E2 ubiquitin-conjugating enzyme]-L-cysteine + [acceptor protein]-N(6)-ubiquitinyl-L-lysine.. The protein operates within protein modification; protein ubiquitination. In terms of biological role, E3 ubiquitin-protein ligase which accepts ubiquitin from E2 ubiquitin-conjugating enzymes UBE2L3 and UBE2L6 in the form of a thioester and then directly transfers the ubiquitin to targeted substrates. Mediates the ubiquitination and degradation of the DNA damage kinase PRKDC during DNA damage. Positively regulates DNA virus or exogenous cytosolic DNA-triggered innate immune response by mediating STING1 ubiquitination and increasing its 'Lys-6'-linked ubiquitination and translocation from the endoplasmic reticulum to the Golgi leading to downstream signaling pathways. Plays a positive role in EGF-dependent cell proliferation by prolonging EGF/EGFR signaling during EGF stimulation through EGFR ubiquitination. Increases ERK activity independently of EGFR signaling by promoting polyubiquitination and subsequent degradation of VRK3 in the cytosol. This chain is E3 ubiquitin-protein ligase RNF144A (Rnf144a), found in Mus musculus (Mouse).